The following is a 617-amino-acid chain: ATP-dependent zinc metalloprotease FtsH (617 aa).

Topologically, residues 1–7 (MKIPFDR) are cytoplasmic. The chain crosses the membrane as a helical span at residues 8–28 (WLGWPTLLLLLLGLWLLGSSL). Residues 29–102 (RDQRTVEAVP…VSYRRVRESN (74 aa)) are Periplasmic-facing. The chain crosses the membrane as a helical span at residues 103-123 (WLSQLLSWMAGPLLLLGFWYF). Topologically, residues 124–617 (MSRRIDGQQG…GRPAAIRQVA (494 aa)) are cytoplasmic. Residue 198–205 (GPTGTGKT) coordinates ATP. Zn(2+) is bound at residue histidine 421. Glutamate 422 is a catalytic residue. Positions 425 and 498 each coordinate Zn(2+).

This sequence in the central section; belongs to the AAA ATPase family. It in the C-terminal section; belongs to the peptidase M41 family. Homohexamer. Zn(2+) serves as cofactor.

The protein resides in the cell inner membrane. Its function is as follows. Acts as a processive, ATP-dependent zinc metallopeptidase for both cytoplasmic and membrane proteins. Plays a role in the quality control of integral membrane proteins. This Methylibium petroleiphilum (strain ATCC BAA-1232 / LMG 22953 / PM1) protein is ATP-dependent zinc metalloprotease FtsH.